The sequence spans 105 residues: Large ribosomal subunit protein bL21 (105 aa).

This sequence belongs to the bacterial ribosomal protein bL21 family. As to quaternary structure, part of the 50S ribosomal subunit. Contacts protein L20.

Functionally, this protein binds to 23S rRNA in the presence of protein L20. The sequence is that of Large ribosomal subunit protein bL21 from Rickettsia peacockii (strain Rustic).